The following is a 202-amino-acid chain: Glycerol-3-phosphate acyltransferase (202 aa).

6 helical membrane passes run 2 to 22 (MIIV…GFVI), 54 to 74 (FLVT…PLWL), 85 to 105 (FFTN…YPVY), 120 to 140 (VVLG…FIIL), 141 to 161 (KIFK…VIGS), and 162 to 182 (LIIQ…ILII).

This sequence belongs to the PlsY family. In terms of assembly, probably interacts with PlsX.

It localises to the cell membrane. It carries out the reaction an acyl phosphate + sn-glycerol 3-phosphate = a 1-acyl-sn-glycero-3-phosphate + phosphate. It functions in the pathway lipid metabolism; phospholipid metabolism. Functionally, catalyzes the transfer of an acyl group from acyl-phosphate (acyl-PO(4)) to glycerol-3-phosphate (G3P) to form lysophosphatidic acid (LPA). This enzyme utilizes acyl-phosphate as fatty acyl donor, but not acyl-CoA or acyl-ACP. The protein is Glycerol-3-phosphate acyltransferase of Staphylococcus aureus (strain bovine RF122 / ET3-1).